A 332-amino-acid chain; its full sequence is Diaminopimelate epimerase (332 aa).

Substrate contacts are provided by Asn13 and Asn73. Cys82 (proton donor) is an active-site residue. Residues 83 to 84, Asn172, Asn209, and 227 to 228 each bind substrate; these read GN and ER. Cys236 serves as the catalytic Proton acceptor. Substrate is bound at residue 237–238; that stretch reads GT.

It belongs to the diaminopimelate epimerase family. As to quaternary structure, homodimer.

It is found in the cytoplasm. It carries out the reaction (2S,6S)-2,6-diaminopimelate = meso-2,6-diaminopimelate. It functions in the pathway amino-acid biosynthesis; L-lysine biosynthesis via DAP pathway; DL-2,6-diaminopimelate from LL-2,6-diaminopimelate: step 1/1. Catalyzes the stereoinversion of LL-2,6-diaminopimelate (L,L-DAP) to meso-diaminopimelate (meso-DAP), a precursor of L-lysine and an essential component of the bacterial peptidoglycan. This is Diaminopimelate epimerase from Lactiplantibacillus plantarum (strain ATCC BAA-793 / NCIMB 8826 / WCFS1) (Lactobacillus plantarum).